We begin with the raw amino-acid sequence, 849 residues long: Coiled-coil domain-containing protein 87 (849 aa).

Residues 387-415 are a coiled coil; sequence RHPAAGHRLEELEKMLRNLQEEEASGQWD.

Belongs to the CCDC87 family.

Plays a role in spermatogenesis, where it is important for normal sperm head morphology. Also required for the acrosome reaction and thus normal male fertility. The chain is Coiled-coil domain-containing protein 87 (CCDC87) from Homo sapiens (Human).